A 259-amino-acid polypeptide reads, in one-letter code: Glutamate racemase (259 aa).

Substrate is bound by residues 7–8 (DS) and 39–40 (YG). Cys-70 functions as the Proton donor/acceptor in the catalytic mechanism. A substrate-binding site is contributed by 71 to 72 (NT). The active-site Proton donor/acceptor is the Cys-180. 181–182 (TH) lines the substrate pocket.

It belongs to the aspartate/glutamate racemases family.

The enzyme catalyses L-glutamate = D-glutamate. Its pathway is cell wall biogenesis; peptidoglycan biosynthesis. Functionally, provides the (R)-glutamate required for cell wall biosynthesis. The protein is Glutamate racemase of Persephonella marina (strain DSM 14350 / EX-H1).